Consider the following 100-residue polypeptide: Urease subunit gamma (100 aa).

This sequence belongs to the urease gamma subunit family. In terms of assembly, heterotrimer of UreA (gamma), UreB (beta) and UreC (alpha) subunits. Three heterotrimers associate to form the active enzyme.

Its subcellular location is the cytoplasm. The catalysed reaction is urea + 2 H2O + H(+) = hydrogencarbonate + 2 NH4(+). It functions in the pathway nitrogen metabolism; urea degradation; CO(2) and NH(3) from urea (urease route): step 1/1. The polypeptide is Urease subunit gamma (Jannaschia sp. (strain CCS1)).